Reading from the N-terminus, the 236-residue chain is Potassium/proton antiporter CemA (236 aa).

The next 4 membrane-spanning stretches (helical) occupy residues 12-32, 114-134, 161-181, and 196-216; these read TVTS…TNHV, IANV…LLLG, IILF…EILI, and FIFL…KYWI.

It belongs to the CemA family.

Its subcellular location is the plastid. The protein resides in the chloroplast inner membrane. It carries out the reaction K(+)(in) + H(+)(out) = K(+)(out) + H(+)(in). In terms of biological role, contributes to K(+)/H(+) antiport activity by supporting proton efflux to control proton extrusion and homeostasis in chloroplasts in a light-dependent manner to modulate photosynthesis. Prevents excessive induction of non-photochemical quenching (NPQ) under continuous-light conditions. Indirectly promotes efficient inorganic carbon uptake into chloroplasts. This Chlorokybus atmophyticus (Soil alga) protein is Potassium/proton antiporter CemA.